We begin with the raw amino-acid sequence, 501 residues long: Sarpagan bridge enzyme (501 aa).

A helical; Signal-anchor for type II membrane protein membrane pass occupies residues 3-23; that stretch reads VMQLSFSYPALFLFVFFLFML. Cys441 contributes to the heme binding site.

It belongs to the cytochrome P450 family. The cofactor is heme. As to expression, highly expressed in roots. Expressed at low levels in stems.

It is found in the endoplasmic reticulum membrane. The enzyme catalyses (19E)-geissoschizine + reduced [NADPH--hemoprotein reductase] + O2 = polyneuridine aldehyde + oxidized [NADPH--hemoprotein reductase] + 2 H2O + H(+). It catalyses the reaction tetrahydroalstonine + A + reduced [NADPH--hemoprotein reductase] + O2 = alstonine + AH2 + oxidized [NADPH--hemoprotein reductase] + 2 H2O + H(+). It carries out the reaction ajmalicine + A + reduced [NADPH--hemoprotein reductase] + O2 = serpentine + AH2 + oxidized [NADPH--hemoprotein reductase] + 2 H2O + H(+). It participates in alkaloid biosynthesis; ajmaline biosynthesis. In terms of biological role, monooxygenase involved in the biosynthesis of ajmaline-type monoterpenoid indole alkaloids (MIAs) natural products, important plant-derived pharmaceuticals used in the therapy of heart disorders. Converts by cyclization the strictosidine-derived geissoschizine to the sarpagan alkaloid polyneuridine aldehyde, precursor of vomilenine, an intermediate chemical in the biosynthesis of ajmaline. Converts by aromatization the tetrahydro-beta-carboline alkaloids tetrahydroalstonine and ajmalicine to the corresponding beta-carboline alkaloids alstonine and serpentine, respectively. The chain is Sarpagan bridge enzyme from Gelsemium sempervirens (Carolina jasmine).